Consider the following 293-residue polypeptide: Nucleotide-binding protein DvMF_0424 (293 aa).

13–20 (GLSGAGKS) contributes to the ATP binding site. 65 to 68 (DLRE) lines the GTP pocket.

The protein belongs to the RapZ-like family.

Functionally, displays ATPase and GTPase activities. This is Nucleotide-binding protein DvMF_0424 from Nitratidesulfovibrio vulgaris (strain DSM 19637 / Miyazaki F) (Desulfovibrio vulgaris).